The primary structure comprises 473 residues: Adenosylhomocysteinase (473 aa).

3 residues coordinate substrate: T64, D139, and E199. 200 to 202 (TTT) provides a ligand contact to NAD(+). Substrate-binding residues include K229 and D233. Residues N234, 263-268 (GYGDVG), E286, N321, 342-344 (IGH), and N387 each bind NAD(+).

It belongs to the adenosylhomocysteinase family. It depends on NAD(+) as a cofactor.

The protein localises to the cytoplasm. The enzyme catalyses S-adenosyl-L-homocysteine + H2O = L-homocysteine + adenosine. It functions in the pathway amino-acid biosynthesis; L-homocysteine biosynthesis; L-homocysteine from S-adenosyl-L-homocysteine: step 1/1. Functionally, may play a key role in the regulation of the intracellular concentration of adenosylhomocysteine. This is Adenosylhomocysteinase from Paraburkholderia phymatum (strain DSM 17167 / CIP 108236 / LMG 21445 / STM815) (Burkholderia phymatum).